A 222-amino-acid chain; its full sequence is uncharacterized protein (222 aa).

This is an uncharacterized protein from Fowlpox virus (strain NVSL) (FPV).